The sequence spans 816 residues: Leucine--tRNA ligase (816 aa).

A 'HIGH' region motif is present at residues 40–51 (SYPSGAQLHAGH). The 'KMSKS' region motif lies at 576–580 (KMSKS). K579 provides a ligand contact to ATP.

This sequence belongs to the class-I aminoacyl-tRNA synthetase family.

Its subcellular location is the cytoplasm. It catalyses the reaction tRNA(Leu) + L-leucine + ATP = L-leucyl-tRNA(Leu) + AMP + diphosphate. This is Leucine--tRNA ligase from Clostridium beijerinckii (strain ATCC 51743 / NCIMB 8052) (Clostridium acetobutylicum).